The sequence spans 455 residues: Epoxide hydrolase 1 (455 aa).

A helical; Signal-anchor for type III membrane protein membrane pass occupies residues 1-21 (MWLELVLASLLGFVIYWFVSR). The Cytoplasmic segment spans residues 22–455 (DKEETLPLGD…RKFVSLAELQ (434 aa)). Residue aspartate 226 is the Nucleophile of the active site. A Dimethylated arginine modification is found at arginine 295. Tyrosine 374 (proton donor) is an active-site residue. Histidine 431 serves as the catalytic Proton acceptor. Lysine 439 is modified (N6-acetyllysine).

Belongs to the peptidase S33 family.

The protein localises to the microsome membrane. Its subcellular location is the endoplasmic reticulum membrane. It carries out the reaction cis-stilbene oxide + H2O = (1R,2R)-hydrobenzoin. It catalyses the reaction 1-(4-methoxyphenyl)-N-methyl-N-[(3-methyloxetan-3-yl)methyl]methanamine + H2O = 2-{[(4-methoxybenzyl)(methyl)amino]methyl}-2-methylpropane-1,3-diol. The catalysed reaction is 8,9-epoxy-(5Z,11Z,14Z)-eicosatrienoate + H2O = 8,9-dihydroxy-(5Z,11Z,14Z)-eicosatrienoate. The enzyme catalyses 11,12-epoxy-(5Z,8Z,14Z)-eicosatrienoate + H2O = 11,12-dihydroxy-(5Z,8Z,14Z)-eicosatrienoate. It carries out the reaction 2-(5Z,8Z,11Z,14Z-eicosatetraenoyl)-glycerol + H2O = glycerol + (5Z,8Z,11Z,14Z)-eicosatetraenoate + H(+). Inhibited by 10-hydroxystearamide and methoxy-arachidonyl fluorophosphate. Functionally, biotransformation enzyme that catalyzes the hydrolysis of arene and aliphatic epoxides to less reactive and more water soluble dihydrodiols by the trans addition of water. May play a role in the metabolism of endogenous lipids such as epoxide-containing fatty acids. Metabolizes the abundant endocannabinoid 2-arachidonoylglycerol (2-AG) to free arachidonic acid (AA) and glycerol. Binds 20(S)-hydroxycholesterol (20(S)-OHC). The polypeptide is Epoxide hydrolase 1 (Rattus norvegicus (Rat)).